The chain runs to 663 residues: A-type ATP synthase subunit I (663 aa).

7 helical membrane-spanning segments follow: residues F376 to A396, F412 to S432, L468 to I488, G497 to S517, I534 to I554, A568 to V588, and G589 to F609.

Belongs to the V-ATPase 116 kDa subunit family. As to quaternary structure, has multiple subunits with at least A(3), B(3), C, D, E, F, H, I and proteolipid K(x).

The protein resides in the cell membrane. In terms of biological role, component of the A-type ATP synthase that produces ATP from ADP in the presence of a proton gradient across the membrane. This chain is A-type ATP synthase subunit I, found in Thermococcus kodakarensis (strain ATCC BAA-918 / JCM 12380 / KOD1) (Pyrococcus kodakaraensis (strain KOD1)).